The primary structure comprises 157 residues: MDPQTLITKANKVSYYGNPTSKESWRYDWYQPSKVSSNVQQPQQQLGDMENNLEKYPFRYKTWLRNQEDEKNLQRESCEDILDLKEFDRRILKKSLMTSHTKGDTSKATGAPSANQGDEALSVDDIRGAVGNSEAIPGLSAGVNNDNTKESKDVKMN.

The residue at position 77 (Ser-77) is a Phosphoserine. Positions 95 to 157 (SLMTSHTKGD…TKESKDVKMN (63 aa)) are disordered. The span at 96–116 (LMTSHTKGDTSKATGAPSANQ) shows a compositional bias: polar residues. Ser-122 carries the phosphoserine modification. Basic and acidic residues predominate over residues 147 to 157 (NTKESKDVKMN).

In terms of assembly, interacts with STH1 and SWI3. Component of the two forms of the RSC complex composed of at least either RSC1 or RSC2, and ARP7, ARP9, LDB7, NPL6, RSC3, RSC30, RSC4, RSC58, RSC6, RSC8, RSC9, SFH1, STH1, HTL1 and probably RTT102. The complexes interact with histone and histone variant components of centromeric chromatin. Probable additional component of the SWI/SNF global transcription activator complex. The 1.14 MDa SWI/SNF complex is composed of 11 different subunits: one copy each of SWI1, SNF2/SWI2, SNF5, SNF12/SWP73, ARP7/SWP61, ARP9/SWP59; two copies each of SWI3, SNF6, SNF11, SWP82; and three copies of TAF14/SWP29.

Its subcellular location is the nucleus. Its function is as follows. Probable component of the chromatin structure-remodeling complex (RSC) which is involved in transcription regulation and nucleosome positioning. RSC is responsible for the transfer of a histone octamer from a nucleosome core particle to naked DNA. The reaction requires ATP and involves an activated RSC-nucleosome intermediate. Remodeling reaction also involves DNA translocation, DNA twist and conformational change. As a reconfigurer of centromeric and flanking nucleosomes, RSC complex is required both for proper kinetochore function in chromosome segregation and, via a PKC1-dependent signaling pathway, for organization of the cellular cytoskeleton. Probable component of the SWI/SNF complex, an ATP-dependent chromatin-remodeling complex, is required for the positive and negative regulation of gene expression of a large number of genes. It changes chromatin structure by altering DNA-histone contacts within a nucleosome, leading eventually to a change in nucleosome position, thus facilitating or repressing binding of gene-specific transcription factors. This is Regulator of Ty1 transposition protein 102 (RTT102) from Saccharomyces cerevisiae (strain ATCC 204508 / S288c) (Baker's yeast).